Reading from the N-terminus, the 90-residue chain is U7-theraphotoxin-Hhn1b (90 aa).

Positions 1–19 (MKTAIFTVVLALAVFAVLS) are cleaved as a signal peptide. Residues 20–50 (FGWEANEKALSEEFTELIHEKEAASETEARE) constitute a propeptide that is removed on maturation. 3 disulfides stabilise this stretch: Cys-51/Cys-65, Cys-58/Cys-70, and Cys-64/Cys-81.

Belongs to the neurotoxin 10 (Hwtx-1) family. 13 (Hntx-13) subfamily. As to expression, expressed by the venom gland.

It localises to the secreted. Ion channel inhibitor. This chain is U7-theraphotoxin-Hhn1b, found in Cyriopagopus hainanus (Chinese bird spider).